Consider the following 327-residue polypeptide: Vacuolar protein sorting-associated protein 26A (327 aa).

Positions 305 to 327 (RNFHQRYESPEPRPSLSAEQPEM) are disordered.

It belongs to the VPS26 family. Component of the heterotrimeric retromer cargo-selective complex (CSC) which is believed to associate with variable sorting nexins to form functionally distinct retromer complex variants.

It localises to the cytoplasm. The protein localises to the endosome membrane. The protein resides in the early endosome. Acts as a component of the retromer cargo-selective complex (CSC). The CSC is believed to be the core functional component of retromer or respective retromer complex variants acting to prevent missorting of selected transmembrane cargo proteins into the lysosomal degradation pathway. Retromer mediates retrograde transport of cargo proteins from endosomes to the trans-Golgi network (TGN). The chain is Vacuolar protein sorting-associated protein 26A (vps26a) from Danio rerio (Zebrafish).